The primary structure comprises 299 residues: DNA-binding transcriptional repressor CapW (299 aa).

Residues M1 to E84 are winged HTH domain. A WYL domain region spans residues A85–V196. The region spanning S120–K200 is the WYL domain. Positions Y145 to R189 are probable ligand-binding region. The interval F197–R299 is WCX domain.

As to quaternary structure, homodimer.

Its function is as follows. Transcriptional regulator of a CBASS antivirus system. CBASS (cyclic oligonucleotide-based antiphage signaling system) provides immunity against bacteriophage. The CD-NTase protein synthesizes cyclic nucleotides in response to infection; these serve as specific second messenger signals. The signals activate a diverse range of effectors, leading to bacterial cell death and thus abortive phage infection. A type III CBASS system, part of a CapW-Cap6-Cap8-Cap7-CdnC-NucC locus. Binds specifically to palindromes that overlap the -10 site in the promoter of cap6, found beween found between the genes for divergently transcribed capW and cap6 (cognate DNA). Probably represses transcription bidirectionally from the promoter. Mutations that make it a constitutive repressor in E.coli do not change DNA-binding affinity. The polypeptide is DNA-binding transcriptional repressor CapW (Stenotrophomonas maltophilia (Pseudomonas maltophilia)).